The chain runs to 179 residues: Large ribosomal subunit protein uL5 (179 aa).

This sequence belongs to the universal ribosomal protein uL5 family. Part of the 50S ribosomal subunit; part of the 5S rRNA/L5/L18/L25 subcomplex. Contacts the 5S rRNA and the P site tRNA. Forms a bridge to the 30S subunit in the 70S ribosome.

This is one of the proteins that bind and probably mediate the attachment of the 5S RNA into the large ribosomal subunit, where it forms part of the central protuberance. In the 70S ribosome it contacts protein S13 of the 30S subunit (bridge B1b), connecting the 2 subunits; this bridge is implicated in subunit movement. Contacts the P site tRNA; the 5S rRNA and some of its associated proteins might help stabilize positioning of ribosome-bound tRNAs. This is Large ribosomal subunit protein uL5 from Thermoanaerobacter sp. (strain X514).